Consider the following 273-residue polypeptide: Shikimate dehydrogenase (NADP(+)) (273 aa).

Residues 18–20 (SKS) and Thr-65 each bind shikimate. Residue Lys-69 is the Proton acceptor of the active site. Position 81 (Glu-81) interacts with NADP(+). Shikimate is bound by residues Asn-90 and Asp-105. NADP(+) contacts are provided by residues 130–134 (GAGGA), 154–159 (NRTHSK), and Met-217. A shikimate-binding site is contributed by Tyr-219. Gly-240 is an NADP(+) binding site.

The protein belongs to the shikimate dehydrogenase family. As to quaternary structure, homodimer.

It catalyses the reaction shikimate + NADP(+) = 3-dehydroshikimate + NADPH + H(+). It functions in the pathway metabolic intermediate biosynthesis; chorismate biosynthesis; chorismate from D-erythrose 4-phosphate and phosphoenolpyruvate: step 4/7. Involved in the biosynthesis of the chorismate, which leads to the biosynthesis of aromatic amino acids. Catalyzes the reversible NADPH linked reduction of 3-dehydroshikimate (DHSA) to yield shikimate (SA). In Janthinobacterium sp. (strain Marseille) (Minibacterium massiliensis), this protein is Shikimate dehydrogenase (NADP(+)).